The primary structure comprises 1072 residues: Zn(2)-C6 fungal-type transcription factor FTF2 (1072 aa).

The zn(2)-C6 fungal-type DNA-binding region spans 179-206 (CIACRRKKIRCSGEKPACKHCLRSRIPC).

Its subcellular location is the nucleus. Zn(2)-C6 fungal-type transcription factor that has a role in conidia production and also in plant colonization. Acts as a negative regulator of the production of macroconidia and is required for full virulence and the positive regulation of SIX effectors. In addition, FTF2 is also involved in the regulation of class II hydrophobins FOXG_02746 and FOXG_02748 likely required for plant colonization. This Fusarium oxysporum f. sp. lycopersici (strain 4287 / CBS 123668 / FGSC 9935 / NRRL 34936) (Fusarium vascular wilt of tomato) protein is Zn(2)-C6 fungal-type transcription factor FTF2.